The following is a 485-amino-acid chain: D-alanine--D-alanyl carrier protein ligase (485 aa).

144 to 145 lines the ATP pocket; the sequence is TS. A D-alanine-binding site is contributed by Asp-189. Position 284–289 (284–289) interacts with ATP; it reads NTYGPT. Val-293 contributes to the D-alanine binding site. Positions 365 and 473 each coordinate ATP. Lys-473 provides a ligand contact to D-alanine.

It belongs to the ATP-dependent AMP-binding enzyme family. DltA subfamily.

It localises to the cytoplasm. The catalysed reaction is holo-[D-alanyl-carrier protein] + D-alanine + ATP = D-alanyl-[D-alanyl-carrier protein] + AMP + diphosphate. The protein operates within cell wall biogenesis; lipoteichoic acid biosynthesis. Its function is as follows. Catalyzes the first step in the D-alanylation of lipoteichoic acid (LTA), the activation of D-alanine and its transfer onto the D-alanyl carrier protein (Dcp) DltC. In an ATP-dependent two-step reaction, forms a high energy D-alanyl-AMP intermediate, followed by transfer of the D-alanyl residue as a thiol ester to the phosphopantheinyl prosthetic group of the Dcp. D-alanylation of LTA plays an important role in modulating the properties of the cell wall in Gram-positive bacteria, influencing the net charge of the cell wall. This chain is D-alanine--D-alanyl carrier protein ligase, found in Staphylococcus epidermidis (strain ATCC 35984 / DSM 28319 / BCRC 17069 / CCUG 31568 / BM 3577 / RP62A).